Reading from the N-terminus, the 556-residue chain is Arginine--tRNA ligase (556 aa).

Residues 132-142 (ANPTGDLHLGH) carry the 'HIGH' region motif.

The protein belongs to the class-I aminoacyl-tRNA synthetase family. Monomer.

Its subcellular location is the cytoplasm. It carries out the reaction tRNA(Arg) + L-arginine + ATP = L-arginyl-tRNA(Arg) + AMP + diphosphate. This chain is Arginine--tRNA ligase, found in Bacillus cereus (strain ATCC 10987 / NRS 248).